We begin with the raw amino-acid sequence, 74 residues long: uncharacterized protein (74 aa).

The first 19 residues, 1-19 (MNPGFDAVDQETAAAQAVA), serve as a signal peptide directing secretion.

This is an uncharacterized protein from Mycobacterium tuberculosis (strain ATCC 25618 / H37Rv).